Here is a 295-residue protein sequence, read N- to C-terminus: Probable endonuclease 4 (295 aa).

Zn(2+) contacts are provided by H78, H118, E154, D188, H191, H225, D238, H240, and E270.

This sequence belongs to the AP endonuclease 2 family. Requires Zn(2+) as cofactor.

It carries out the reaction Endonucleolytic cleavage to 5'-phosphooligonucleotide end-products.. Its function is as follows. Endonuclease IV plays a role in DNA repair. It cleaves phosphodiester bonds at apurinic or apyrimidinic (AP) sites, generating a 3'-hydroxyl group and a 5'-terminal sugar phosphate. This Vibrio parahaemolyticus serotype O3:K6 (strain RIMD 2210633) protein is Probable endonuclease 4.